The chain runs to 839 residues: Nucleoporin NIC96 (839 aa).

The segment at 25–60 is leucine zipper-like heptad repeat, required for interaction with NSP1; it reads LLESSDNLPSASSELGSIQVSINELRRRVFQLRSKN.

Belongs to the nucleoporin interacting component (NIC) family. Component of the nuclear pore complex (NPC). NPC constitutes the exclusive means of nucleocytoplasmic transport. NPCs allow the passive diffusion of ions and small molecules and the active, nuclear transport receptor-mediated bidirectional transport of macromolecules such as proteins, RNAs, ribonucleoparticles (RNPs), and ribosomal subunits across the nuclear envelope. Due to its 8-fold rotational symmetry, all subunits are present with 8 copies or multiples thereof. NIC96 is part of three NPC subcomplexes, interacting with NSP1 of the NUP57 subcomplex (NIC96, NSP1, NUP49, NUP57), with NUP120 of the NUP84 subcomplex (SEH1, NUP85, NUP120, NUP145C, SEC13, NUP84, NUP133), and with NUP53 of the NUP53-NUP59-NUP170 subcomplex. The interaction with NUP53 is cell cycle dependent. NIC96 is also associated with the distal ring of the nuclear basket and interacts here with MLP2, which forms together with MLP1 nuclear pore-attached intranuclear filaments.

The protein resides in the nucleus. It is found in the nuclear pore complex. Its subcellular location is the nucleus membrane. Functions as a component of the nuclear pore complex (NPC). NPC components, collectively referred to as nucleoporins (NUPs), can play the role of both NPC structural components and of docking or interaction partners for transiently associated nuclear transport factors. NIC96, which is localized to the core of the NPC and the distal ring of the nuclear basket, is required for de novo assembly of NPCs. It is involved in nuclear GSP1 import. The chain is Nucleoporin NIC96 (NIC96) from Saccharomyces cerevisiae (strain ATCC 204508 / S288c) (Baker's yeast).